The chain runs to 603 residues: DNA mismatch repair protein MutL (603 aa).

Residues 336 to 346 (EVSKKQKEQQK) show a composition bias toward basic and acidic residues. Disordered stretches follow at residues 336 to 355 (EVSKKQKEQQKSEQIQMSFE) and 361 to 384 (KETPTLFSKPNVPEYVPSDEDTSR).

Belongs to the DNA mismatch repair MutL/HexB family.

Its function is as follows. This protein is involved in the repair of mismatches in DNA. It is required for dam-dependent methyl-directed DNA mismatch repair. May act as a 'molecular matchmaker', a protein that promotes the formation of a stable complex between two or more DNA-binding proteins in an ATP-dependent manner without itself being part of a final effector complex. This chain is DNA mismatch repair protein MutL, found in Listeria welshimeri serovar 6b (strain ATCC 35897 / DSM 20650 / CCUG 15529 / CIP 8149 / NCTC 11857 / SLCC 5334 / V8).